Consider the following 543-residue polypeptide: Probable protein kinase UbiB (543 aa).

One can recognise a Protein kinase domain in the interval 123–501 (DFDSQALASA…QQRQGQSRYL (379 aa)). Residues 129–137 (LASASIAQV) and Lys-152 contribute to the ATP site. The active-site Proton acceptor is Asp-287. Residues 517–539 (LADATEVSTGFIVAGALAWFIGW) traverse the membrane as a helical segment.

It belongs to the ABC1 family. UbiB subfamily.

The protein localises to the cell inner membrane. It participates in cofactor biosynthesis; ubiquinone biosynthesis [regulation]. Is probably a protein kinase regulator of UbiI activity which is involved in aerobic coenzyme Q (ubiquinone) biosynthesis. This chain is Probable protein kinase UbiB, found in Yersinia pseudotuberculosis serotype O:1b (strain IP 31758).